Consider the following 644-residue polypeptide: N-acetylgalactosaminyltransferase 4 (644 aa).

Over 1–13 (MAIKKRYVKRLLR) the chain is Cytoplasmic. The chain crosses the membrane as a helical; Signal-anchor for type II membrane protein span at residues 14–34 (KVVLLLVVIVTVSLVTTLVVE). At 35–644 (RRMKNAAELT…MLDTFYDGLK (610 aa)) the chain is on the lumenal side. 2 N-linked (GlcNAc...) asparagine glycosylation sites follow: asparagine 157 and asparagine 179. The segment at 177–288 (LPNISVIFIF…YNWLPPLIEP (112 aa)) is catalytic subdomain A. Residues aspartate 218 and arginine 249 each contribute to the substrate site. Residue aspartate 272 coordinates Mn(2+). Serine 273 lines the substrate pocket. Histidine 274 contacts Mn(2+). The tract at residues 345 to 407 (PYRSPVMMGG…PCSRVAHIFR (63 aa)) is catalytic subdomain B. Tryptophan 376 is a substrate binding site. Histidine 404 contributes to the Mn(2+) binding site. Arginine 407 lines the substrate pocket. In terms of domain architecture, Ricin B-type lectin spans 496–629 (AAGIIQNVAN…GNDRQRWEFG (134 aa)). Cysteine 509 and cysteine 526 are joined by a disulfide. 2 N-linked (GlcNAc...) asparagine glycosylation sites follow: asparagine 529 and asparagine 565. 2 cysteine pairs are disulfide-bonded: cysteine 556/cysteine 573 and cysteine 600/cysteine 617. Residue asparagine 632 is glycosylated (N-linked (GlcNAc...) asparagine).

It belongs to the glycosyltransferase 2 family. GalNAc-T subfamily. Requires Mn(2+) as cofactor. Expressed in developing oocytes and egg chambers. During embryonic stages 9-11, expressed in the primordium of the foregut, midgut and hindgut. During embryonic stages 12-13, shows specific expression in the proventriculus that continues until the end of embryogenesis. In third instar larvae, ubiquitously expressed in wing, eye-antennal, leg and haltere imaginal disks.

The protein localises to the golgi apparatus membrane. It carries out the reaction L-seryl-[protein] + UDP-N-acetyl-alpha-D-galactosamine = a 3-O-[N-acetyl-alpha-D-galactosaminyl]-L-seryl-[protein] + UDP + H(+). The catalysed reaction is L-threonyl-[protein] + UDP-N-acetyl-alpha-D-galactosamine = a 3-O-[N-acetyl-alpha-D-galactosaminyl]-L-threonyl-[protein] + UDP + H(+). The protein operates within protein modification; protein glycosylation. Its function is as follows. Glycopeptide transferase involved in O-linked oligosaccharide biosynthesis, which catalyzes the transfer of an N-acetyl-D-galactosamine residue to an already glycosylated peptide. In contrast to other proteins of the family, it does not act as a peptide transferase that transfers GalNAc onto serine or threonine residue on the protein receptor, but instead requires the prior addition of a GalNAc on a peptide before adding additional GalNAc moieties. Some peptide transferase activity is however not excluded, considering that its appropriate peptide substrate may remain unidentified. Prefers the diglycosylated Muc5AC-3/13 as substrate. The sequence is that of N-acetylgalactosaminyltransferase 4 from Drosophila melanogaster (Fruit fly).